A 257-amino-acid chain; its full sequence is Imidazole glycerol phosphate synthase subunit HisF (257 aa).

Catalysis depends on residues Asp11 and Asp130.

The protein belongs to the HisA/HisF family. Heterodimer of HisH and HisF.

The protein localises to the cytoplasm. It catalyses the reaction 5-[(5-phospho-1-deoxy-D-ribulos-1-ylimino)methylamino]-1-(5-phospho-beta-D-ribosyl)imidazole-4-carboxamide + L-glutamine = D-erythro-1-(imidazol-4-yl)glycerol 3-phosphate + 5-amino-1-(5-phospho-beta-D-ribosyl)imidazole-4-carboxamide + L-glutamate + H(+). It functions in the pathway amino-acid biosynthesis; L-histidine biosynthesis; L-histidine from 5-phospho-alpha-D-ribose 1-diphosphate: step 5/9. Its function is as follows. IGPS catalyzes the conversion of PRFAR and glutamine to IGP, AICAR and glutamate. The HisF subunit catalyzes the cyclization activity that produces IGP and AICAR from PRFAR using the ammonia provided by the HisH subunit. This is Imidazole glycerol phosphate synthase subunit HisF from Shewanella baltica (strain OS155 / ATCC BAA-1091).